The chain runs to 72 residues: Translation initiation factor IF-1 (72 aa).

Residues 1–72 form the S1-like domain; the sequence is MAKDDVIEVE…TRGRIVWRGK (72 aa).

This sequence belongs to the IF-1 family. Component of the 30S ribosomal translation pre-initiation complex which assembles on the 30S ribosome in the order IF-2 and IF-3, IF-1 and N-formylmethionyl-tRNA(fMet); mRNA recruitment can occur at any time during PIC assembly.

It is found in the cytoplasm. Functionally, one of the essential components for the initiation of protein synthesis. Stabilizes the binding of IF-2 and IF-3 on the 30S subunit to which N-formylmethionyl-tRNA(fMet) subsequently binds. Helps modulate mRNA selection, yielding the 30S pre-initiation complex (PIC). Upon addition of the 50S ribosomal subunit IF-1, IF-2 and IF-3 are released leaving the mature 70S translation initiation complex. This chain is Translation initiation factor IF-1, found in Caldanaerobacter subterraneus subsp. tengcongensis (strain DSM 15242 / JCM 11007 / NBRC 100824 / MB4) (Thermoanaerobacter tengcongensis).